The sequence spans 192 residues: Probable nicotinate-nucleotide adenylyltransferase (192 aa).

The protein belongs to the NadD family.

It carries out the reaction nicotinate beta-D-ribonucleotide + ATP + H(+) = deamido-NAD(+) + diphosphate. It participates in cofactor biosynthesis; NAD(+) biosynthesis; deamido-NAD(+) from nicotinate D-ribonucleotide: step 1/1. In terms of biological role, catalyzes the reversible adenylation of nicotinate mononucleotide (NaMN) to nicotinic acid adenine dinucleotide (NaAD). The polypeptide is Probable nicotinate-nucleotide adenylyltransferase (Cereibacter sphaeroides (strain ATCC 17029 / ATH 2.4.9) (Rhodobacter sphaeroides)).